A 224-amino-acid polypeptide reads, in one-letter code: Ribonuclease T (224 aa).

Residues 1–11 (MSEDLYEDDQD) are compositionally biased toward acidic residues. The interval 1–20 (MSEDLYEDDQDSQVSSGSRH) is disordered. The Exonuclease domain maps to 32-206 (VVVDVETGGF…YDTEKTAELF (175 aa)). 4 residues coordinate Mg(2+): aspartate 35, glutamate 37, histidine 193, and aspartate 198. Histidine 193 acts as the Proton donor/acceptor in catalysis.

The protein belongs to the RNase T family. Homodimer. Mg(2+) serves as cofactor.

Functionally, trims short 3' overhangs of a variety of RNA species, leaving a one or two nucleotide 3' overhang. Responsible for the end-turnover of tRNA: specifically removes the terminal AMP residue from uncharged tRNA (tRNA-C-C-A). Also appears to be involved in tRNA biosynthesis. This Pseudomonas entomophila (strain L48) protein is Ribonuclease T.